Reading from the N-terminus, the 359-residue chain is Bergaptol O-methyltransferase (359 aa).

H126 contacts bergaptol. S-adenosyl-L-homocysteine is bound by residues S179, G203, D226, D246, and K260. A bergaptol-binding site is contributed by H264. H264 functions as the Proton acceptor in the catalytic mechanism.

The protein belongs to the class I-like SAM-binding methyltransferase superfamily. Cation-independent O-methyltransferase family. COMT subfamily.

The catalysed reaction is a 5-hydroxyfurocoumarin + S-adenosyl-L-methionine = a 5-methoxyfurocoumarin + S-adenosyl-L-homocysteine + H(+). It carries out the reaction bergaptol + S-adenosyl-L-methionine = bergapten + S-adenosyl-L-homocysteine. With respect to regulation, inhibited by Cu(2+), Ni(2+) and Co(2+). The polypeptide is Bergaptol O-methyltransferase (Glehnia littoralis (Beach silvertop)).